A 113-amino-acid polypeptide reads, in one-letter code: Ribulose bisphosphate carboxylase small subunit (113 aa).

Belongs to the RuBisCO small chain family. Heterohexadecamer of 8 large and 8 small subunits.

The protein resides in the carboxysome. Functionally, ruBisCO catalyzes two reactions: the carboxylation of D-ribulose 1,5-bisphosphate, the primary event in carbon dioxide fixation, as well as the oxidative fragmentation of the pentose substrate in the photorespiration process. Both reactions occur simultaneously and in competition at the same active site. Although the small subunit is not catalytic it is essential for maximal activity. This Synechococcus sp. (strain WH7803) protein is Ribulose bisphosphate carboxylase small subunit.